Reading from the N-terminus, the 773-residue chain is Cellobiose dehydrogenase (773 aa).

Positions Met1 to Ser18 are cleaved as a signal peptide. Gln19 carries the pyrrolidone carboxylic acid modification. A heme domain region spans residues Gln19–Gly208. 2 residues coordinate heme: Met83 and His181. Residues Leu203–Gly227 form a disordered region. Over residues Pro210–Gly227 the composition is skewed to low complexity. Positions Tyr235–Pro773 are oxidoreductase. Asp236–Arg265 provides a ligand contact to FAD. Catalysis depends on His707, which acts as the Proton acceptor.

The protein in the C-terminal section; belongs to the GMC oxidoreductase family. Requires FAD as cofactor. Heme is required as a cofactor.

It is found in the secreted. It carries out the reaction D-cellobiose + A = D-cellobiono-1,5-lactone + AH2. In terms of biological role, degrades both lignin and cellulose. Oxidizes cellobiose to cellobionolactone. The polypeptide is Cellobiose dehydrogenase (CDH-1) (Phanerodontia chrysosporium (White-rot fungus)).